Reading from the N-terminus, the 582-residue chain is ATP-dependent lipid A-core flippase (582 aa).

The next 5 membrane-spanning stretches (helical) occupy residues 16 to 36, 64 to 84, 153 to 173, 253 to 273, and 275 to 295; these read LWPT…ALIL, LLWM…TSYI, IIGL…ILVV, PIIQ…ASFP, and VMDS…IALM. Residues 28–310 form the ABC transmembrane type-1 domain; it reads IVAGIALILN…LTNVNAQFQR (283 aa). The region spanning 342–578 is the ABC transporter domain; the sequence is LEFRNVTFTY…HGVYAQLHKM (237 aa). Position 376-383 (376-383) interacts with ATP; sequence GRSGSGKS.

Belongs to the ABC transporter superfamily. Lipid exporter (TC 3.A.1.106) family. Homodimer.

Its subcellular location is the cell inner membrane. The catalysed reaction is ATP + H2O + lipid A-core oligosaccharideSide 1 = ADP + phosphate + lipid A-core oligosaccharideSide 2.. Involved in lipopolysaccharide (LPS) biosynthesis. Translocates lipid A-core from the inner to the outer leaflet of the inner membrane. Transmembrane domains (TMD) form a pore in the inner membrane and the ATP-binding domain (NBD) is responsible for energy generation. This Salmonella choleraesuis (strain SC-B67) protein is ATP-dependent lipid A-core flippase.